The primary structure comprises 214 residues: Pyridoxine/pyridoxamine 5'-phosphate oxidase (214 aa).

Substrate contacts are provided by residues 8–11 (RINY) and Lys66. Residues 61 to 66 (RIVLVK), 76 to 77 (FT), Arg82, Lys83, and Gln105 each bind FMN. Residues Tyr123, Arg127, and Ser131 each contribute to the substrate site. FMN contacts are provided by residues 140-141 (QS) and Trp184. A substrate-binding site is contributed by 190–192 (RLH). Residue Arg194 coordinates FMN.

It belongs to the pyridoxamine 5'-phosphate oxidase family. Homodimer. The cofactor is FMN.

It carries out the reaction pyridoxamine 5'-phosphate + O2 + H2O = pyridoxal 5'-phosphate + H2O2 + NH4(+). The catalysed reaction is pyridoxine 5'-phosphate + O2 = pyridoxal 5'-phosphate + H2O2. The protein operates within cofactor metabolism; pyridoxal 5'-phosphate salvage; pyridoxal 5'-phosphate from pyridoxamine 5'-phosphate: step 1/1. Its pathway is cofactor metabolism; pyridoxal 5'-phosphate salvage; pyridoxal 5'-phosphate from pyridoxine 5'-phosphate: step 1/1. Its function is as follows. Catalyzes the oxidation of either pyridoxine 5'-phosphate (PNP) or pyridoxamine 5'-phosphate (PMP) into pyridoxal 5'-phosphate (PLP). This Burkholderia multivorans (strain ATCC 17616 / 249) protein is Pyridoxine/pyridoxamine 5'-phosphate oxidase.